A 410-amino-acid polypeptide reads, in one-letter code: Formyl-CoA:oxalate CoA-transferase (410 aa).

CoA contacts are provided by residues 18-19 (QS), 72-75 (LNTK), 96-98 (NFG), Arg104, and 136-139 (KAYE). Asp168 functions as the Nucleophile in the catalytic mechanism. The disordered stretch occupies residues 221-245 (PLAEYPNEDFGDEVPRSGNASGGGQ). 243–245 (GGQ) provides a ligand contact to substrate.

The protein belongs to the CoA-transferase III family. Frc subfamily. Homodimer.

It catalyses the reaction formyl-CoA + oxalate = oxalyl-CoA + formate. The protein operates within metabolic intermediate degradation; oxalate degradation; CO(2) and formate from oxalate: step 1/2. Involved in the catabolism of oxalate and in the adapatation to low pH via the induction of the oxalate-dependent acid tolerance response (ATR). Catalyzes the transfer of the CoA moiety from formyl-CoA to oxalate. The polypeptide is Formyl-CoA:oxalate CoA-transferase (Streptomyces coelicolor (strain ATCC BAA-471 / A3(2) / M145)).